The primary structure comprises 238 residues: Small ribosomal subunit protein uS2c (238 aa).

The protein belongs to the universal ribosomal protein uS2 family.

The protein resides in the plastid. Its subcellular location is the chloroplast. This chain is Small ribosomal subunit protein uS2c (rps2), found in Jasminum nudiflorum (Winter jasmine).